Consider the following 160-residue polypeptide: MKVAVYPGTFDPITNGHLDIIRRAVSIFDRVVVGVAADNYKKTLFSLEERVELVRTVTRDIPGVTVKSFSGLLVDFARREEAVAIVRGLRAVSDFEYEFQMSIMNKKLASDLETVFLMTATEYSFLSSSIIRQAASLGGCIHGLVPPEVERVLLKRYGFL.

Thr9 is a substrate binding site. Residues 9–10 and His17 each bind ATP; that span reads TF. Substrate contacts are provided by Lys41, Leu73, and Arg87. ATP-binding positions include 88–90, Glu98, and 123–129; these read GLR and YSFLSSS.

The protein belongs to the bacterial CoaD family. Homohexamer. Mg(2+) is required as a cofactor.

Its subcellular location is the cytoplasm. It carries out the reaction (R)-4'-phosphopantetheine + ATP + H(+) = 3'-dephospho-CoA + diphosphate. Its pathway is cofactor biosynthesis; coenzyme A biosynthesis; CoA from (R)-pantothenate: step 4/5. Reversibly transfers an adenylyl group from ATP to 4'-phosphopantetheine, yielding dephospho-CoA (dPCoA) and pyrophosphate. The sequence is that of Phosphopantetheine adenylyltransferase from Moorella thermoacetica (strain ATCC 39073 / JCM 9320).